We begin with the raw amino-acid sequence, 203 residues long: UPF0637 protein SH1846 (203 aa).

It belongs to the UPF0637 family.

This Staphylococcus haemolyticus (strain JCSC1435) protein is UPF0637 protein SH1846.